We begin with the raw amino-acid sequence, 474 residues long: Glutamate--tRNA ligase (474 aa).

Positions 9–19 match the 'HIGH' region motif; it reads PSPTGYLHVGG. The short motif at 240-244 is the 'KMSKS' region element; it reads KLSKR. ATP is bound at residue Lys-243.

It belongs to the class-I aminoacyl-tRNA synthetase family. Glutamate--tRNA ligase type 1 subfamily. As to quaternary structure, monomer.

The protein localises to the cytoplasm. It carries out the reaction tRNA(Glu) + L-glutamate + ATP = L-glutamyl-tRNA(Glu) + AMP + diphosphate. In terms of biological role, catalyzes the attachment of glutamate to tRNA(Glu) in a two-step reaction: glutamate is first activated by ATP to form Glu-AMP and then transferred to the acceptor end of tRNA(Glu). The sequence is that of Glutamate--tRNA ligase from Aliivibrio fischeri (strain ATCC 700601 / ES114) (Vibrio fischeri).